We begin with the raw amino-acid sequence, 100 residues long: MKLTPREKDKLLIFTAALLAERRRARGLKLNYPETVAFITAALMEAARDGRTVAEVMHYGTTLLTRDDVMEGVPEMIPDIQVEATFPDGTKLVTVHHPIP.

It belongs to the urease gamma subunit family. In terms of assembly, heterotrimer of UreA (gamma), UreB (beta) and UreC (alpha) subunits. Three heterotrimers associate to form the active enzyme.

The protein localises to the cytoplasm. The enzyme catalyses urea + 2 H2O + H(+) = hydrogencarbonate + 2 NH4(+). The protein operates within nitrogen metabolism; urea degradation; CO(2) and NH(3) from urea (urease route): step 1/1. This chain is Urease subunit gamma, found in Burkholderia mallei (strain NCTC 10247).